Consider the following 94-residue polypeptide: uncharacterized protein (94 aa).

Transmembrane regions (helical) follow at residues 9–29 and 34–54; these read TLAKIVCTVTLITLYFYFFST and LIELAVQMFFALIGLFWVFIV.

It localises to the cell membrane. This is an uncharacterized protein from Bacillus subtilis (strain 168).